We begin with the raw amino-acid sequence, 91 residues long: Cell division topological specificity factor (91 aa).

It belongs to the MinE family.

Its function is as follows. Prevents the cell division inhibition by proteins MinC and MinD at internal division sites while permitting inhibition at polar sites. This ensures cell division at the proper site by restricting the formation of a division septum at the midpoint of the long axis of the cell. The chain is Cell division topological specificity factor from Chloroflexus aggregans (strain MD-66 / DSM 9485).